A 274-amino-acid chain; its full sequence is MKKVAIVGLGWLGMPLAMSLSARGWQVTGSKTTQDGVEAARMSGIDSYLLRMEPELVCDSDDLDALMDADALVITLPARRSGPGDEFYLQAVQELVDSALAHRIPRIIFTSSTSVYGDAQGTVKETTPRNPVTNSGRVLEELEDWLHNLPGTSVDILRLAGLVGPGRHPGRFFAGKTAPDGEHGVNLVHLEDVIGAITLLLQAPKGGHIYNICAPAHPARNVFYPQMARLLGLEPPQFRNSLDSGKGKIIDGSRICNELGFEYQYPDPLVMPLE.

The N-terminal stretch at 1 to 24 (MKKVAIVGLGWLGMPLAMSLSARG) is a signal peptide. An ATP-binding site is contributed by 170-177 (GRFFAGKT).

The chain is Protein YeeZ (yeeZ) from Escherichia coli O157:H7.